The primary structure comprises 300 residues: Alpha-ketoglutarate-dependent dioxygenase alkB homolog 4 (300 aa).

The residue at position 2 (Ala-2) is an N-acetylalanine. The Fe2OG dioxygenase domain occupies 148-272; sequence PVEQCNLDYS…RVCATFRELS (125 aa). 3 residues coordinate Fe cation: His-167, Asp-169, and His-252. 2-oxoglutarate is bound at residue Arg-263.

The protein belongs to the alkB family. In terms of assembly, interacts with ZFHX3, MLLT3, MLLT1, HSF4, EP300, TES, EIF3C, MTMR6 and PSMA6. Requires Fe(2+) as cofactor.

It localises to the cytoplasm. The protein resides in the nucleus. Its subcellular location is the nucleolus. The protein localises to the midbody. The catalysed reaction is an N(6)-methyl-2'-deoxyadenosine in DNA + 2-oxoglutarate + O2 = a 2'-deoxyadenosine in DNA + formaldehyde + succinate + CO2. The enzyme catalyses N(6)-methyl-L-lysyl-[protein] + 2-oxoglutarate + O2 = L-lysyl-[protein] + formaldehyde + succinate + CO2. Its function is as follows. Dioxygenase that mediates demethylation of actin monomethylated at 'Lys-84' (K84me1), thereby acting as a regulator of actomyosin-processes. Demethylation of actin K84me1 is required for maintaining actomyosin dynamics supporting normal cleavage furrow ingression during cytokinesis and cell migration. In addition to proteins, also demethylates DNA: specifically demethylates DNA methylated on the 6th position of adenine (N(6)-methyladenosine) DNA, thereby regulating Polycomb silencing. This chain is Alpha-ketoglutarate-dependent dioxygenase alkB homolog 4, found in Mus musculus (Mouse).